A 358-amino-acid chain; its full sequence is Alanine racemase (358 aa).

The active-site Proton acceptor; specific for D-alanine is Lys-34. An N6-(pyridoxal phosphate)lysine modification is found at Lys-34. Position 129 (Arg-129) interacts with substrate. Residue Tyr-254 is the Proton acceptor; specific for L-alanine of the active site. A substrate-binding site is contributed by Met-302.

It belongs to the alanine racemase family. It depends on pyridoxal 5'-phosphate as a cofactor.

The catalysed reaction is L-alanine = D-alanine. Its pathway is amino-acid biosynthesis; D-alanine biosynthesis; D-alanine from L-alanine: step 1/1. Functionally, catalyzes the interconversion of L-alanine and D-alanine. May also act on other amino acids. This chain is Alanine racemase (alr), found in Vibrio vulnificus (strain CMCP6).